Consider the following 102-residue polypeptide: Large ribosomal subunit protein eL21 (102 aa).

Residues 1-21 (MVRRSKGFRSRTRKKLRKKPR) are compositionally biased toward basic residues. Residues 1 to 33 (MVRRSKGFRSRTRKKLRKKPRERGLSPLGPMTQ) form a disordered region.

Belongs to the eukaryotic ribosomal protein eL21 family.

In Methanopyrus kandleri (strain AV19 / DSM 6324 / JCM 9639 / NBRC 100938), this protein is Large ribosomal subunit protein eL21.